An 895-amino-acid chain; its full sequence is MTNKANLPSNESIMNTLAPEQKKSKANAQPFSVFVPAAYEDPHVYRQVEELLDQVCQVVSPVWPLKDWIAVNPYAGLSERSFHESRDYLRVFSKCELLPSMDHFSAHYQSGSFAESHIEAALLENSPGKDLSQKKADVLKALQTRLHTGDASKQTMPEKSSLPRIATIADRLSAHGEVDWTEIVKDEIGKHCSAHYDEGQSTWASPWRNLPLYQAWRNKAKIDRGIEILGLTGFRHFVDELPHTVEATIVHLLQRLNIPRALWETFLLAHAFSLPGWSGWTKYQGLQTDPTGTGRMQFDDFRGLLAMSLAYDVAISEAFLFEVNWSSVLDHQSLSLMDSDNDCKSDRKILLRAMEIAYRDDLLAKLPVRELTTDHVADEDFEEPTNLATKPAVQMAFCIDVRSERFRRHLEQVDASVDTLGIAGFFGLPFEYVPLGQSSGDTHAPVLLSPKFALREKSSPCVGDCATSRNDTAEKQVSVRNGKKLWKRLQTSAVGCFSFVETIGLFSGFDLATRLMSPKFRNSLRIKHPSKLHDVEATPLDLDHLVEQGIDLDQQTDLVEGLLNSMGLSDDFAPLVVLCGHGSQTDNNAMAAGLDCGACGGHSGAPNARLAAILLNDRRIQKRLSDRGIEIPAETHVIAAWHNTTTDQIEWLDLDAVPASHQSRIVELQNVADAASHLTREERLPLLNESCTDSLISRASDWSQTRPEWGLAGNASMLIGPRELTRGRSLDGRVFLHSYNQTTDPKGAVLESILTAPMVVAHWINMQYYASTVDPTLFGSGCKTIHNVVGQFGVLSGNGGDLQAGLPNQSLGCGLKMQHLPLRLQTVVVASRESIDRVIAKHANIRNLLQNGWVHMVAIDSGQKYRYHSDGSWVQLRTENTSRAESEWQVVGGTC.

Zn(2+) is bound by residues C398, D400, H581, and C596.

This sequence belongs to the inorganic carbon transporter (TC 9.A.2) DabA family. Forms a complex with DabB. The cofactor is Zn(2+).

Its subcellular location is the cell inner membrane. Its function is as follows. Part of an energy-coupled inorganic carbon pump. The protein is Probable inorganic carbon transporter subunit DabA 1 of Rhodopirellula baltica (strain DSM 10527 / NCIMB 13988 / SH1).